The chain runs to 177 residues: Probable DNA-directed RNA polymerase subunit delta (177 aa).

The HTH HARE-type domain maps to 14–81; sequence CSMIEVVHSV…GENRWGLRSW (68 aa). A disordered region spans residues 93–177; the sequence is PQPKPKKKRK…ETEEEEEEEL (85 aa). The segment covering 106–177 has biased composition (acidic residues); it reads DGFDDYIEED…ETEEEEEEEL (72 aa).

This sequence belongs to the RpoE family. As to quaternary structure, RNAP is composed of a core of 2 alpha, a beta and a beta' subunits. The core is associated with a delta subunit and one of several sigma factors.

Functionally, participates in both the initiation and recycling phases of transcription. In the presence of the delta subunit, RNAP displays an increased specificity of transcription, a decreased affinity for nucleic acids, and an increased efficiency of RNA synthesis because of enhanced recycling. This Bacillus cereus (strain AH187) protein is Probable DNA-directed RNA polymerase subunit delta.